Here is a 73-residue protein sequence, read N- to C-terminus: UPF0154 protein BCG9842_B1526 (73 aa).

Residues 3–23 (IWLGILVGVVALVAGVALGFF) form a helical membrane-spanning segment.

The protein belongs to the UPF0154 family.

The protein resides in the cell membrane. The protein is UPF0154 protein BCG9842_B1526 of Bacillus cereus (strain G9842).